Consider the following 707-residue polypeptide: Polyribonucleotide nucleotidyltransferase (707 aa).

Positions 491 and 497 each coordinate Mg(2+). The KH domain maps to 558 to 617; sequence PRIEKIKIHPDKIGLLIGPGGKTIKKISAESGAEITIEDDGTVMIYSSSADSLEAAREMI. The region spanning 622 to 695 is the S1 motif domain; the sequence is GEVTVGGIYR…EKGRYKFSRK (74 aa).

The protein belongs to the polyribonucleotide nucleotidyltransferase family. Mg(2+) serves as cofactor.

It is found in the cytoplasm. It carries out the reaction RNA(n+1) + phosphate = RNA(n) + a ribonucleoside 5'-diphosphate. Functionally, involved in mRNA degradation. Catalyzes the phosphorolysis of single-stranded polyribonucleotides processively in the 3'- to 5'-direction. This chain is Polyribonucleotide nucleotidyltransferase, found in Methylacidiphilum infernorum (isolate V4) (Methylokorus infernorum (strain V4)).